Consider the following 306-residue polypeptide: MDERLPERAHLVTEQVNPDSARLDRLDSPSLVELFCREDERVVPAVRAAAPAIARAIDLTAAALRGGGRLFYVGAGTSGRLGVLDASECPPTFCTDPEQVQGIIAGGTAALTRSVEGAEDDPEAGAAELAGRALSAADVVVGISAGGTAPYVSGALAYARSLGGVTIFVACVPTNQIPERWDIEIRVPVGPEVLAGSTRLKAGTATKLVLNILSTGAMVRLGKTYGNLMVDVAVSNQKLRDRAVRILTTLTELERTAALALLEASGLRVKVALLMHWSNQDPASCATALEAAGGLLPVALEKLSGR.

An SIS domain is found at T60–K223. E88 acts as the Proton donor in catalysis. E119 is an active-site residue.

It belongs to the GCKR-like family. MurNAc-6-P etherase subfamily. As to quaternary structure, homodimer.

It carries out the reaction N-acetyl-D-muramate 6-phosphate + H2O = N-acetyl-D-glucosamine 6-phosphate + (R)-lactate. It participates in amino-sugar metabolism; N-acetylmuramate degradation. Specifically catalyzes the cleavage of the D-lactyl ether substituent of MurNAc 6-phosphate, producing GlcNAc 6-phosphate and D-lactate. In Gloeobacter violaceus (strain ATCC 29082 / PCC 7421), this protein is N-acetylmuramic acid 6-phosphate etherase.